A 346-amino-acid chain; its full sequence is MALKSKLVSLLFLIATLSSTFAASFSDSDSDSDLLNELVSLRSTSESGVIHLDDHGISKFLTSASTPRPYSLLVFFDATQLHSKNELRLQELRREFGIVSASFLANNNGSEGTKLFFCEIEFSKSQSSFQLFGVNALPHIRLVSPSISNLRDESGQMDQSDYSRLAESMAEFVEQRTKLKVGPIQRPPLLSKPQIGIIVALIVIATPFIIKRVLKGETILHDTRLWLSGAIFIYFFSVAGTMHNIIRKMPMFLQDRNDPNKLVFFYQGSGMQLGAEGFAVGFLYTVVGLLLAFVTNVLVRVKNITAQRLIMLLALFISFWAVKKVVYLDNWKTGYGIHPYWPSSWR.

The first 22 residues, 1-22, serve as a signal peptide directing secretion; it reads MALKSKLVSLLFLIATLSSTFA. At 23–189 the chain is on the lumenal side; it reads ASFSDSDSDS…KVGPIQRPPL (167 aa). The N-linked (GlcNAc...) asparagine glycan is linked to Asn108. The chain crosses the membrane as a helical span at residues 190–210; it reads LSKPQIGIIVALIVIATPFII. The Cytoplasmic segment spans residues 211-225; that stretch reads KRVLKGETILHDTRL. Residues 226–246 traverse the membrane as a helical segment; it reads WLSGAIFIYFFSVAGTMHNII. The Lumenal segment spans residues 247-277; that stretch reads RKMPMFLQDRNDPNKLVFFYQGSGMQLGAEG. The chain crosses the membrane as a helical span at residues 278 to 298; sequence FAVGFLYTVVGLLLAFVTNVL. Residues 299 to 308 are Cytoplasmic-facing; that stretch reads VRVKNITAQR. Residues 309 to 329 traverse the membrane as a helical segment; that stretch reads LIMLLALFISFWAVKKVVYLD. At 330–346 the chain is on the lumenal side; that stretch reads NWKTGYGIHPYWPSSWR.

The protein belongs to the OST3/OST6 family. Component of the oligosaccharyltransferase (OST) complex.

The protein resides in the endoplasmic reticulum membrane. Subunit of the oligosaccharyl transferase (OST) complex that catalyzes the initial transfer of a defined glycan (Glc(3)Man(9)GlcNAc(2) in eukaryotes) from the lipid carrier dolichol-pyrophosphate to an asparagine residue within an Asn-X-Ser/Thr consensus motif in nascent polypeptide chains, the first step in protein N-glycosylation. N-glycosylation occurs cotranslationally and the complex associates with the Sec61 complex at the channel-forming translocon complex that mediates protein translocation across the endoplasmic reticulum (ER). All subunits are required for a maximal enzyme activity. This Arabidopsis thaliana (Mouse-ear cress) protein is Probable dolichyl-diphosphooligosaccharide--protein glycosyltransferase subunit 3B (OST3B).